The sequence spans 205 residues: Peroxynitrite isomerase (205 aa).

Positions 1–23 are disordered; sequence MTEPDPAAAEQRPSVGRNLPTFQ. Positions 52 to 58 match the GXWXGXG motif; it reads GVWRGEG. Threonine 63, lysine 168, and histidine 195 together coordinate heme b.

The protein belongs to the nitrobindin family. In terms of assembly, homodimer. Heme b serves as cofactor.

It catalyses the reaction peroxynitrite = nitrate. It functions in the pathway nitrogen metabolism. Heme-binding protein able to scavenge peroxynitrite and to protect free L-tyrosine against peroxynitrite-mediated nitration, by acting as a peroxynitrite isomerase that converts peroxynitrite to nitrate. Therefore, this protein likely plays a role in peroxynitrite sensing and in the detoxification of reactive nitrogen and oxygen species (RNS and ROS, respectively). Is able to bind nitric oxide (NO) in vitro, but may act as a sensor of peroxynitrite levels in vivo. The polypeptide is Peroxynitrite isomerase (Mycobacteroides abscessus (strain ATCC 19977 / DSM 44196 / CCUG 20993 / CIP 104536 / JCM 13569 / NCTC 13031 / TMC 1543 / L948) (Mycobacterium abscessus)).